We begin with the raw amino-acid sequence, 270 residues long: Secreted RxLR effector protein 149 (270 aa).

A signal peptide spans 1-21 (MRNGVVLFGLFFIGYSSCVLA). Residues 43 to 58 (RTLQADDPERILAEER) carry the RxLR-dEER motif.

The protein belongs to the RxLR effector family.

Its subcellular location is the secreted. It is found in the host nucleus. The protein resides in the host cytoplasm. Functionally, secreted effector that completely suppresses the host cell death induced by cell death-inducing proteins. In Plasmopara viticola (Downy mildew of grapevine), this protein is Secreted RxLR effector protein 149.